Reading from the N-terminus, the 178-residue chain is MAASVRILGIDPGSRVTGFGVIDVRGRDHFYVASGCIKTPADAPLADRIAVIVRHIGEVVTVYKPQQAAVEQVFVNVNPASTLMLGQARGAALAALVSHKLPVSEYTALQVKQAVVGKGKAAKEQVQHMVVQMLGLSGTPQPDAADGLAVALTHALRNHGLAAKLNPSGMQVKRGRFQ.

Residues aspartate 11, glutamate 71, and aspartate 143 contribute to the active site. 3 residues coordinate Mg(2+): aspartate 11, glutamate 71, and aspartate 143.

The protein belongs to the RuvC family. Homodimer which binds Holliday junction (HJ) DNA. The HJ becomes 2-fold symmetrical on binding to RuvC with unstacked arms; it has a different conformation from HJ DNA in complex with RuvA. In the full resolvosome a probable DNA-RuvA(4)-RuvB(12)-RuvC(2) complex forms which resolves the HJ. It depends on Mg(2+) as a cofactor.

The protein localises to the cytoplasm. It catalyses the reaction Endonucleolytic cleavage at a junction such as a reciprocal single-stranded crossover between two homologous DNA duplexes (Holliday junction).. The RuvA-RuvB-RuvC complex processes Holliday junction (HJ) DNA during genetic recombination and DNA repair. Endonuclease that resolves HJ intermediates. Cleaves cruciform DNA by making single-stranded nicks across the HJ at symmetrical positions within the homologous arms, yielding a 5'-phosphate and a 3'-hydroxyl group; requires a central core of homology in the junction. The consensus cleavage sequence is 5'-(A/T)TT(C/G)-3'. Cleavage occurs on the 3'-side of the TT dinucleotide at the point of strand exchange. HJ branch migration catalyzed by RuvA-RuvB allows RuvC to scan DNA until it finds its consensus sequence, where it cleaves and resolves the cruciform DNA. This chain is Crossover junction endodeoxyribonuclease RuvC, found in Neisseria meningitidis serogroup B (strain ATCC BAA-335 / MC58).